The following is a 116-amino-acid chain: uncharacterized protein (116 aa).

Residues 76-116 form a disordered region; it reads VPPPRYSYIRSESSRNNLRNSARNQPQNLVSEQDSDSNREN. The span at 85–99 shows a compositional bias: low complexity; sequence RSESSRNNLRNSARN.

This is an uncharacterized protein from Glycine max (Soybean).